The sequence spans 439 residues: Rho GTPase-activating protein 1 (439 aa).

Met1 is subject to N-acetylmethionine. Over residues 28 to 48 (IDEKNWPSDEMPDFPKSDDSK) the composition is skewed to basic and acidic residues. A disordered region spans residues 28–52 (IDEKNWPSDEMPDFPKSDDSKSSSP). Residues Ser44, Ser47, Ser50, and Ser51 each carry the phosphoserine modification. Residues 63 to 218 (PYYDIARHQI…QVLKYDDFLK (156 aa)) enclose the CRAL-TRIO domain. Tyr65 carries the post-translational modification Phosphotyrosine. An N6-acetyllysine modification is found at Lys80. The SH3-binding signature appears at 228-238 (PKPMPPRPPLP). In terms of domain architecture, Rho-GAP spans 244 to 431 (VSLQHLQEKN…FLLDHQGELF (188 aa)).

Found in a complex with XPO7, EIF4A1, ARHGAP1, VPS26A, VPS29, VPS35 and SFN. Interacts with BNIPL. In terms of tissue distribution, ubiquitous.

Its subcellular location is the cytoplasm. Functionally, GTPase activator for the Rho, Rac and Cdc42 proteins, converting them to the putatively inactive GDP-bound state. Cdc42 seems to be the preferred substrate. The polypeptide is Rho GTPase-activating protein 1 (ARHGAP1) (Homo sapiens (Human)).